Here is a 343-residue protein sequence, read N- to C-terminus: Heat-inducible transcription repressor HrcA (343 aa).

This sequence belongs to the HrcA family.

Negative regulator of class I heat shock genes (grpE-dnaK-dnaJ and groELS operons). Prevents heat-shock induction of these operons. The polypeptide is Heat-inducible transcription repressor HrcA (Bacillus cytotoxicus (strain DSM 22905 / CIP 110041 / 391-98 / NVH 391-98)).